The following is a 601-amino-acid chain: Protein FREE1 (601 aa).

A disordered region spans residues 1–240 (MQQGDYNSYY…SGEYPAFEDS (240 aa)). Residues 21 to 35 (TPNPNPNPNPSPPAP) are compositionally biased toward pro residues. 2 stretches are compositionally biased toward polar residues: residues 63 to 79 (DYSNYSQNYTPYGQNSE) and 125 to 155 (LSSYGSFDSTAPYQQPTSQHMYYSPYDQHQT). Residues 161-175 (APPPSSAPAPNPNPA) are compositionally biased toward pro residues. Positions 176 to 197 (PYSSSLYSAPPYSSGGSSIPPS) are enriched in low complexity. Residues 214–231 (NRSRSDLGSDLYGKRSDS) are compositionally biased toward basic and acidic residues. At Ser-218 the chain carries Phosphoserine. The segment at 338–344 (LDGLRML) is nuclear export signal. An FYVE-type zinc finger spans residues 455-515 (DEAVSKCTSC…VCDRCMAEVS (61 aa)). Positions 461, 464, 477, 480, 485, 488, 507, and 510 each coordinate Zn(2+). A coiled-coil region spans residues 527–552 (RNVSLQSHEDLARKLQEEMERNRKSS). 2 positions are modified to phosphoserine: Ser-530 and Ser-533. The tract at residues 542 to 561 (QEEMERNRKSSSGLREGSGR) is disordered.

In terms of assembly, part of the ESCRT-I complex. Interacts with VPS23A and VPS23B, but not with VPS28 or VPS37. Interacts with IRT1. Interacts with SH3P2. Interacts with SH3P3, but not with SH3P1. Interacts (via N-terminus) with PYL4 and PYR3. Interacts (via C-terminus) with SNRK2D/SNRK2.2, SNRK2I/SNRK2.3, ABF4 and ABI5. Interacts with SINAT1, SINAT2, SINAT3 and SINAT4. Interacts with SINAT5. Component of a phosphoinositide 3-kinase (PI3K) complex containing ATG6, SH3P2 and FREE1. Phosphorylated at Ser-530 and Ser-533 by SNRK2D/SNRK2.2 and SNRK2I/SNRK2.3 in response to abscisic acid (ABA). Phosphorylation is necessary for ABA-induced FREE1 nuclear import. In terms of processing, ubiquitinated by SINAT1, SINAT2, SINAT3 and SINAT4 for subsequent proteasomal degradation. In terms of tissue distribution, ubiquitous. Lowest expression in mature seeds.

Its subcellular location is the cytoplasm. It localises to the prevacuolar compartment membrane. The protein localises to the late endosome. It is found in the endosome. The protein resides in the multivesicular body. Its subcellular location is the nucleus. In terms of biological role, endosomal sorting complex required for transport (ESCRT) component regulating multivesicular body (MVB) protein sorting and plant growth. Required for the formation of intra-luminal vesicles (ILVs)in MVBs. Binds to phosphatidylinositol-3-phosphate (PI3P) and ubiquitin. Controls IRT1 recycling to the plasma membrane and impacts the polar delivery of this transporter to the outer plasma membrane domain. Regulates ubiquitin-dependent membrane protein degradation, vacuolar transport, autophagy, and vacuole biogenesis. ESCRT component that binds ubiquitin and regulates vacuolar sorting of proteins. Attenuates abscisic acid (ABA) signaling through RSL1-triggered degradation of the ABA receptors PYR1 and PYL4. Interacts with PYL4 and PYR1, and delivers the ubiquitinated ABA receptors as cargo to the vacuolar degradation pathway. In response to ABA, is phosphorylated by SnRK2 kinases which mediate FREE1 nuclear import. In the nucleus, interacts with the ABA-responsive transcription factors ABF4 and ABI5 to reduce their ability to bind to their cis-regulatory sequences of downstream genes, thus leading to transcriptional inhibition of ABA signaling pathway. Negatively regulates salt stress tolerance via a negative feedback loop involving ABA signaling pathway. The protein is Protein FREE1 of Arabidopsis thaliana (Mouse-ear cress).